A 1437-amino-acid polypeptide reads, in one-letter code: Envelopment polyprotein (1437 aa).

A signal peptide spans 1–21 (MAISTSLLIVALLIKLCLVNT). Residues 22–207 (APPISKCFQD…GYMASSICQN (186 aa)) are Lumenal-facing. Asn65 and Asn88 each carry an N-linked (GlcNAc...) asparagine; by host glycan. Residues 208–228 (IELIIIIILTLAIFIFMCIIT) form a helical membrane-spanning segment. Topologically, residues 229–312 (RTYICYLMLP…RVARSLCKSK (84 aa)) are cytoplasmic. The chain crosses the membrane as a helical span at residues 313–333 (GSSLVISILTAMLILSFITPL). Residues 334-373 (EAMTTNYPDDKKFTLKEVNDIVLGRDMEQELKSSILILMS) are Lumenal-facing. A helical membrane pass occupies residues 374–394 (ICGIGIILIFFGLTVLLEIVL). The Cytoplasmic portion of the chain corresponds to 395-460 (ELIAKRSTIF…TYYIKIRNLK (66 aa)). The helical transmembrane segment at 461 to 481 (LIMLIFSIVILMQNATMLVVA) threads the bilayer. Over 482 to 1391 (GENCWTNTEI…EPLNNFFGNY (910 aa)) the chain is Lumenal. 2 N-linked (GlcNAc...) asparagine; by host glycosylation sites follow: Asn627 and Asn1173. A helical transmembrane segment spans residues 1392–1412 (LNMFLYILGGIILLFLALYIL). Topologically, residues 1413–1437 (MPMCARLRDELKRNERLHQMEMKKR) are cytoplasmic.

It belongs to the orthobunyavirus envelope glycoprotein family. Glycoprotein C and Glycoprotein N interact with each other. Specific enzymatic cleavages in vivo yield mature proteins including nonstructural protein NSm, Glycoprotein C, and Glycoprotein N.

The protein resides in the virion membrane. Its subcellular location is the host Golgi apparatus membrane. The protein localises to the host endoplasmic reticulum membrane. In terms of biological role, glycoprotein C and Glycoprotein N interact with each other and are present at the surface of the virion. They are able to attach the virion to a cell receptor and to promote fusion of membranes after endocytosis of the virion. The sequence is that of Envelopment polyprotein (GP) from Culex.